Consider the following 957-residue polypeptide: Glycine dehydrogenase (decarboxylating) (957 aa).

Position 702 is an N6-(pyridoxal phosphate)lysine (K702).

Belongs to the GcvP family. In terms of assembly, the glycine cleavage system is composed of four proteins: P, T, L and H. The cofactor is pyridoxal 5'-phosphate.

It carries out the reaction N(6)-[(R)-lipoyl]-L-lysyl-[glycine-cleavage complex H protein] + glycine + H(+) = N(6)-[(R)-S(8)-aminomethyldihydrolipoyl]-L-lysyl-[glycine-cleavage complex H protein] + CO2. In terms of biological role, the glycine cleavage system catalyzes the degradation of glycine. The P protein binds the alpha-amino group of glycine through its pyridoxal phosphate cofactor; CO(2) is released and the remaining methylamine moiety is then transferred to the lipoamide cofactor of the H protein. This is Glycine dehydrogenase (decarboxylating) from Bradyrhizobium sp. (strain ORS 278).